Reading from the N-terminus, the 390-residue chain is LL-diaminopimelate aminotransferase (390 aa).

Positions 13, 38, 102, 126, and 176 each coordinate substrate. Pyridoxal 5'-phosphate is bound by residues 101–102 (SK), Tyr-126, Asn-176, Tyr-207, and 235–237 (SVS). N6-(pyridoxal phosphate)lysine is present on Lys-238. Residue Arg-246 participates in pyridoxal 5'-phosphate binding. Arg-364 is a binding site for substrate.

The protein belongs to the class-I pyridoxal-phosphate-dependent aminotransferase family. LL-diaminopimelate aminotransferase subfamily. Homodimer. Pyridoxal 5'-phosphate is required as a cofactor.

It carries out the reaction (2S,6S)-2,6-diaminopimelate + 2-oxoglutarate = (S)-2,3,4,5-tetrahydrodipicolinate + L-glutamate + H2O + H(+). It functions in the pathway amino-acid biosynthesis; L-lysine biosynthesis via DAP pathway; LL-2,6-diaminopimelate from (S)-tetrahydrodipicolinate (aminotransferase route): step 1/1. Functionally, involved in the synthesis of meso-diaminopimelate (m-DAP or DL-DAP), required for both lysine and peptidoglycan biosynthesis. Catalyzes the direct conversion of tetrahydrodipicolinate to LL-diaminopimelate. Is also able to catalyze the reverse reaction in vitro, i.e. the transamination of LL-diaminopimelate with 2-oxoglutarate to produce tetrahydrodipicolinate and glutamate. Can also use m-DAP instead of LL-DAP as the amino-group donor, and oxaloacetate instead of 2-oxoglutarate as the amino-group acceptor. The chain is LL-diaminopimelate aminotransferase from Moorella thermoacetica (strain ATCC 39073 / JCM 9320).